The sequence spans 389 residues: Probable nitrate transporter NarT (389 aa).

Transmembrane regions (helical) follow at residues 14 to 34 (TLSL…MPFI), 45 to 65 (ISII…PFGY), 69 to 89 (IVGA…PIFF), 97 to 117 (GMLM…SVGV), 139 to 159 (GNIG…IIGW), 161 to 181 (TTVR…FIFG), 211 to 231 (WYFI…NYLV), 246 to 266 (GVFI…GDKF), 268 to 288 (AVKV…ILGI), 294 to 314 (LFTV…GLIF), 331 to 351 (IVSM…TYVA), and 353 to 373 (LTGS…IALF).

Belongs to the major facilitator superfamily. Nitrate/nitrite porter (TC 2.A.1.8) family.

Its subcellular location is the cell membrane. Probably required for nitrate uptake under anoxic conditions. Also possibly involved in excretion of nitrite produced by the dissimilatory reduction of nitrate. In Staphylococcus aureus (strain bovine RF122 / ET3-1), this protein is Probable nitrate transporter NarT (narT).